The following is a 42-amino-acid chain: Large ribosomal subunit protein bL36 (42 aa).

This sequence belongs to the bacterial ribosomal protein bL36 family.

This is Large ribosomal subunit protein bL36 from Wolbachia pipientis subsp. Culex pipiens (strain wPip).